We begin with the raw amino-acid sequence, 318 residues long: Probable mitochondrial 2-oxoglutarate/malate carrier protein (318 aa).

Solcar repeat units follow at residues 22 to 111 (QSQL…IKDI), 119 to 210 (LPFT…TKQL), and 219 to 309 (DDIK…LNIL). Helical transmembrane passes span 28–48 (FVIG…IDSL), 79–99 (GFFT…TYTT), 125–145 (IMVG…ADLT), 185–205 (GCSP…SSYD), 225–245 (LIAS…LDVI), and 281–301 (FYKG…LTFI).

It belongs to the mitochondrial carrier (TC 2.A.29) family.

It is found in the mitochondrion inner membrane. Its function is as follows. Mitochondrial solute carriers shuttle metabolites, nucleotides, and cofactors through the mitochondrial inner membrane. Catalyzes the transport of 2-oxoglutarate across the inner mitochondrial membrane in an electroneutral exchange for malate or other dicarboxylic acids, and plays an important role in several metabolic processes, including the malate-aspartate shuttle, the oxoglutarate/isocitrate shuttle, in gluconeogenesis from lactate, and in nitrogen metabolism. This chain is Probable mitochondrial 2-oxoglutarate/malate carrier protein (ucpC), found in Dictyostelium discoideum (Social amoeba).